A 375-amino-acid polypeptide reads, in one-letter code: Ornithine carbamoyltransferase, chloroplastic (375 aa).

Carbamoyl phosphate contacts are provided by residues 123–126 (SMRT), Arg174, His201, and Gln204. L-ornithine is bound by residues Asn232, Asp293, Ser297, and Met298. The active-site Proton acceptor is Cys333. Carbamoyl phosphate is bound by residues 333–334 (CL) and Arg361.

The protein belongs to the aspartate/ornithine carbamoyltransferase superfamily. OTCase family. Homotrimer.

The protein localises to the plastid. It is found in the chloroplast. It carries out the reaction carbamoyl phosphate + L-ornithine = L-citrulline + phosphate + H(+). The protein is Ornithine carbamoyltransferase, chloroplastic (ARGF) of Pisum sativum (Garden pea).